The following is a 217-amino-acid chain: 3,4-dihydroxy-2-butanone 4-phosphate synthase (217 aa).

D-ribulose 5-phosphate-binding positions include 37–38 (RE), D42, 150–154 (RRGHT), and E174. Residue E38 coordinates Mg(2+). Residue H153 coordinates Mg(2+).

This sequence belongs to the DHBP synthase family. Homodimer. It depends on Mg(2+) as a cofactor. The cofactor is Mn(2+).

It catalyses the reaction D-ribulose 5-phosphate = (2S)-2-hydroxy-3-oxobutyl phosphate + formate + H(+). Its pathway is cofactor biosynthesis; riboflavin biosynthesis; 2-hydroxy-3-oxobutyl phosphate from D-ribulose 5-phosphate: step 1/1. Catalyzes the conversion of D-ribulose 5-phosphate to formate and 3,4-dihydroxy-2-butanone 4-phosphate. In Shewanella woodyi (strain ATCC 51908 / MS32), this protein is 3,4-dihydroxy-2-butanone 4-phosphate synthase.